The primary structure comprises 305 residues: NAD kinase (305 aa).

The active-site Proton acceptor is the aspartate 88. NAD(+) is bound by residues 88 to 89 (DG), arginine 93, 162 to 163 (NE), lysine 173, asparagine 192, 203 to 208 (TAYSFS), and glutamine 262.

The protein belongs to the NAD kinase family. The cofactor is a divalent metal cation.

It is found in the cytoplasm. It catalyses the reaction NAD(+) + ATP = ADP + NADP(+) + H(+). Its function is as follows. Involved in the regulation of the intracellular balance of NAD and NADP, and is a key enzyme in the biosynthesis of NADP. Catalyzes specifically the phosphorylation on 2'-hydroxyl of the adenosine moiety of NAD to yield NADP. The polypeptide is NAD kinase (Tropheryma whipplei (strain TW08/27) (Whipple's bacillus)).